Reading from the N-terminus, the 186-residue chain is Probable chorismate pyruvate-lyase (186 aa).

3 residues coordinate substrate: R80, L118, and E170.

Belongs to the UbiC family.

The protein localises to the cytoplasm. It catalyses the reaction chorismate = 4-hydroxybenzoate + pyruvate. Its pathway is cofactor biosynthesis; ubiquinone biosynthesis. In terms of biological role, removes the pyruvyl group from chorismate, with concomitant aromatization of the ring, to provide 4-hydroxybenzoate (4HB) for the ubiquinone pathway. This Pseudomonas syringae pv. tomato (strain ATCC BAA-871 / DC3000) protein is Probable chorismate pyruvate-lyase.